The following is a 204-amino-acid chain: UPF0637 protein LMHCC_1566 (204 aa).

The protein belongs to the UPF0637 family.

The sequence is that of UPF0637 protein LMHCC_1566 from Listeria monocytogenes serotype 4a (strain HCC23).